We begin with the raw amino-acid sequence, 102 residues long: Large ribosomal subunit protein bL21 (102 aa).

It belongs to the bacterial ribosomal protein bL21 family. In terms of assembly, part of the 50S ribosomal subunit. Contacts protein L20.

Its function is as follows. This protein binds to 23S rRNA in the presence of protein L20. This is Large ribosomal subunit protein bL21 from Latilactobacillus sakei subsp. sakei (strain 23K) (Lactobacillus sakei subsp. sakei).